Consider the following 154-residue polypeptide: Aspartate carbamoyltransferase regulatory chain (154 aa).

Zn(2+) contacts are provided by Cys109, Cys114, Cys138, and Cys141.

The protein belongs to the PyrI family. Contains catalytic and regulatory chains. Zn(2+) serves as cofactor.

Involved in allosteric regulation of aspartate carbamoyltransferase. The polypeptide is Aspartate carbamoyltransferase regulatory chain (Methanothrix thermoacetophila (strain DSM 6194 / JCM 14653 / NBRC 101360 / PT) (Methanosaeta thermophila)).